The chain runs to 668 residues: MWHEARKHERKLRGMMVDYKKRAERRREYYEKIKKDPAQFLQVHGRACKVHLDSAVALAAESPVNMMPWQGDTNNMIDRFDVRAHLDHIPDYTPPLLTTISPEQESDERKCNYERYRGLVQNDFAGISEEQCLYQIYIDELYGGLQRPSEDEKKKLAEKKASIGYTYEDSTVAEVEKVAEKPEEEESPAEEESNSDEDEVIPDIDVEVDVDELNQEQVADLNKQATTYGMADGDFVRMLRKDKEEAEAIKHAKALEEEKAMYSGRRSRRQRREFREKRLRGRKISPPSYARRDSPTYDPYKRSPSESSSESRSRSRSPSPGREEKITFITSFGGSDEEAAAAAAAAAASGAAPGKPPAPPQTGGPAPGRNASTRRRSSSSSASRTSSSRSSSRSSSRSRRGYYRSGRHARSRSRSWSRSRSRSRRYSRSRSRGRRHSDGGSRDGHRYSRSPARRGGYVPRRRSRSRSRSGDRYKRGARGPRHHSSSHSRSSWSLSPSRSRSVTRSGSRSQSRSRSRSQSHSQSQSHSPSPPREKLTRPAASPAVGEKLKKTEPAAGKETGAAKPKLTPQERLKLRMQKALNRQFKADKKAAQEKMIQQEHERQEREDELRAMARKIRMKERERREKEREEWERQYSRQSRSPSPRYSREYSSSRRRSRSRSRSPHYRH.

At Ser-101 the chain carries Phosphoserine. Disordered stretches follow at residues 173–232 (AEVE…GMAD) and 252–668 (AKAL…HYRH). Acidic residues predominate over residues 182-214 (PEEEESPAEEESNSDEDEVIPDIDVEVDVDELN). Over residues 265–283 (RRSRRQRREFREKRLRGRK) the composition is skewed to basic residues. Phosphoserine occurs at positions 285 and 294. The span at 290 to 313 (ARRDSPTYDPYKRSPSESSSESRS) shows a compositional bias: basic and acidic residues. The residue at position 327 (Thr-327) is a Phosphothreonine. A phosphoserine mark is found at Ser-331 and Ser-335. Composition is skewed to low complexity over residues 340–353 (AAAA…GAAP) and 378–395 (SSSS…SRSS). A compositionally biased stretch (basic residues) spans 396 to 435 (SRSRRGYYRSGRHARSRSRSWSRSRSRSRRYSRSRSRGRR). Positions 436 to 446 (HSDGGSRDGHR) are enriched in basic and acidic residues. The segment covering 475–486 (RGARGPRHHSSS) has biased composition (basic residues). Low complexity-rich tracts occupy residues 487-510 (HSRS…SRSQ) and 518-527 (QSHSQSQSHS). Ser-541 is subject to Phosphoserine. Thr-567 bears the Phosphothreonine mark. Residues 579–641 (ALNRQFKADK…ERQYSRQSRS (63 aa)) adopt a coiled-coil conformation. Composition is skewed to basic and acidic residues over residues 584–611 (FKAD…ELRA) and 619–635 (KERE…ERQY). The span at 636-645 (SRQSRSPSPR) shows a compositional bias: low complexity. Basic residues predominate over residues 653-668 (SRRRSRSRSRSPHYRH).

The protein belongs to the splicing factor SR family. In terms of assembly, probably interacts with CLK4. Phosphorylated in vitro by CLK4. Highly expressed in brain. Expressed at intermediate level in lung and liver. In brain, it is expressed in the hippocampus, cerebellum and olfactory bulb.

The protein resides in the nucleus. Its subcellular location is the nucleoplasm. In terms of biological role, probably functions as an alternative splicing regulator. May regulate the mRNA splicing of genes such as CLK1. May act by regulating members of the CLK kinase family. The chain is CLK4-associating serine/arginine rich protein (Clasrp) from Mus musculus (Mouse).